The sequence spans 267 residues: Mannose-specific lectin 1 (267 aa).

Positions 1 to 26 (MAKLLLFLLPAILGLLVPPRSWSAVA) are cleaved as a signal peptide. 2 consecutive Bulb-type lectin domains span residues 29-134 (TNYL…PSVP) and 148-255 (NNLL…PQAK). Beta-D-mannose-binding positions include 54-58 (QDDCN), Tyr62, Trp66, Gln67, 173-177 (QGDCN), Tyr181, and 185-188 (YGWQ). The Carbohydrate-binding motif 1 signature appears at 54–62 (QDDCNLVLY). Disulfide bonds link Cys57–Cys77 and Cys176–Cys198. The Carbohydrate-binding motif 2 motif lies at 173–181 (QGDCNLVLY).

In terms of assembly, forms heterotetramer of 2 chains 1 and 2 chains 2 arranged as a dimer of chain 1 and chain 2 heterodimers.

It localises to the secreted. In terms of biological role, mannose-specific lectin. Shows agglutinating activity towards erythrocytes from rabbit. The chain is Mannose-specific lectin 1 from Colocasia esculenta (Wild taro).